Here is a 267-residue protein sequence, read N- to C-terminus: MGVTFDKCETRPANIDAILNGLDRYNPETTTVFQDYVAQQCEDRTFDCYANLALLKLYQFNPHLLQAETVTNVLVKALTVFPSPAFSLCLALLPAHTQPFQASDAEAQAAAQTSDFVESIQKLARLSTLLESAQYTQFWSTLNSDDLYADLVADVAGFEELVRIRIAVEVGKTFREIPAEVLEQWLDLRSREALEKFVAEVCSWEVDKSGANTVIKVPTNKENEARSEVKSERVGVDMFGRVIRRGSSRLHERIDKRYPHRTQPFSF.

Positions 46–233 constitute a PCI domain; sequence FDCYANLALL…EARSEVKSER (188 aa).

This sequence belongs to the eIF-3 subunit K family. As to quaternary structure, component of the eukaryotic translation initiation factor 3 (eIF-3) complex.

The protein resides in the cytoplasm. In terms of biological role, component of the eukaryotic translation initiation factor 3 (eIF-3) complex, which is involved in protein synthesis of a specialized repertoire of mRNAs and, together with other initiation factors, stimulates binding of mRNA and methionyl-tRNAi to the 40S ribosome. The eIF-3 complex specifically targets and initiates translation of a subset of mRNAs involved in cell proliferation. The protein is Eukaryotic translation initiation factor 3 subunit K of Aspergillus niger (strain ATCC MYA-4892 / CBS 513.88 / FGSC A1513).